The primary structure comprises 378 residues: Alcohol dehydrogenase 1 (378 aa).

Cys48 contributes to the Zn(2+) binding site. 49–53 (HTDVL) contacts NAD(+). Zn(2+)-binding residues include His69, Cys99, Cys102, Cys105, Cys113, and Cys177. NAD(+) is bound by residues 202-207 (GIGTVG), Asp226, Lys231, 274-276 (TGV), 297-299 (IGA), and 321-323 (TAF).

It belongs to the zinc-containing alcohol dehydrogenase family. Class-IV subfamily. As to quaternary structure, homodimer. The cofactor is Zn(2+). Present in non-glandular trichome cells.

Its subcellular location is the nucleus. It is found in the cytoplasm. The protein resides in the cytosol. The enzyme catalyses (+)-artemisinic alcohol + NAD(+) = (+)-artemisinic aldehyde + NADH + H(+). It participates in sesquiterpene biosynthesis. In terms of biological role, involved in the biosynthesis of the antimalarial endoperoxide artemisinin. Catalyzes the conversion of artemisinic alcohol into artemisinic aldehyde. The sequence is that of Alcohol dehydrogenase 1 from Artemisia annua (Sweet wormwood).